The primary structure comprises 292 residues: Homoserine kinase (292 aa).

Residue 81 to 91 (RPRSGLGSSGA) coordinates ATP.

It belongs to the GHMP kinase family. Homoserine kinase subfamily.

It localises to the cytoplasm. The catalysed reaction is L-homoserine + ATP = O-phospho-L-homoserine + ADP + H(+). It functions in the pathway amino-acid biosynthesis; L-threonine biosynthesis; L-threonine from L-aspartate: step 4/5. Functionally, catalyzes the ATP-dependent phosphorylation of L-homoserine to L-homoserine phosphate. The chain is Homoserine kinase from Thermococcus kodakarensis (strain ATCC BAA-918 / JCM 12380 / KOD1) (Pyrococcus kodakaraensis (strain KOD1)).